The following is a 681-amino-acid chain: DNA ligase (681 aa).

NAD(+) is bound by residues 45–49 (DFDFD), 94–95 (SL), and Glu120. Catalysis depends on Lys122, which acts as the N6-AMP-lysine intermediate. NAD(+) is bound by residues Arg143, Glu177, Lys289, and Lys313. Zn(2+) contacts are provided by Cys403, Cys406, Cys421, and Cys426. The region spanning 593-681 (SDQQPFAGQS…SLKINFKNTI (89 aa)) is the BRCT domain.

This sequence belongs to the NAD-dependent DNA ligase family. LigA subfamily. Requires Mg(2+) as cofactor. The cofactor is Mn(2+).

The catalysed reaction is NAD(+) + (deoxyribonucleotide)n-3'-hydroxyl + 5'-phospho-(deoxyribonucleotide)m = (deoxyribonucleotide)n+m + AMP + beta-nicotinamide D-nucleotide.. Functionally, DNA ligase that catalyzes the formation of phosphodiester linkages between 5'-phosphoryl and 3'-hydroxyl groups in double-stranded DNA using NAD as a coenzyme and as the energy source for the reaction. It is essential for DNA replication and repair of damaged DNA. In Leptospira borgpetersenii serovar Hardjo-bovis (strain L550), this protein is DNA ligase.